The primary structure comprises 118 residues: Small ribosomal subunit protein uS13 (118 aa).

The segment at 94–118 is disordered; it reads SLPLRGQRTKTNARTRKGPRKPIKR.

Belongs to the universal ribosomal protein uS13 family. As to quaternary structure, part of the 30S ribosomal subunit. Forms a loose heterodimer with protein S19. Forms two bridges to the 50S subunit in the 70S ribosome.

Its function is as follows. Located at the top of the head of the 30S subunit, it contacts several helices of the 16S rRNA. In the 70S ribosome it contacts the 23S rRNA (bridge B1a) and protein L5 of the 50S subunit (bridge B1b), connecting the 2 subunits; these bridges are implicated in subunit movement. Contacts the tRNAs in the A and P-sites. The chain is Small ribosomal subunit protein uS13 from Photobacterium profundum (strain SS9).